We begin with the raw amino-acid sequence, 152 residues long: Aspartate carbamoyltransferase regulatory chain (152 aa).

C108, C113, C137, and C140 together coordinate Zn(2+).

The protein belongs to the PyrI family. As to quaternary structure, contains catalytic and regulatory chains. The cofactor is Zn(2+).

Functionally, involved in allosteric regulation of aspartate carbamoyltransferase. This is Aspartate carbamoyltransferase regulatory chain from Neisseria meningitidis serogroup B (strain ATCC BAA-335 / MC58).